A 1058-amino-acid chain; its full sequence is Carbamoyl phosphate synthase pyrimidine-specific large chain (1058 aa).

Residues 1-401 (MPKRTDIHKI…ATLKAVRSLE (401 aa)) form a carboxyphosphate synthetic domain region. The ATP site is built by Arg129, Arg169, Gly175, Gly176, Gln208, Ile210, Glu215, Gly241, Ile242, His243, Gln284, and Glu298. Residues 133–327 (KALMEELGEP…IAKMAAKIAV (195 aa)) enclose the ATP-grasp 1 domain. Positions 284, 298, and 300 each coordinate Mg(2+). Mn(2+) is bound by residues Gln284, Glu298, and Asn300. Positions 402 to 546 (IGVHHVEEPA…YGTYEFENES (145 aa)) are oligomerization domain. Residues 547-929 (IVTKRPSVLV…ALYKAFEAAK (383 aa)) form a carbamoyl phosphate synthetic domain region. The ATP-grasp 2 domain occupies 671 to 861 (DKVIKALAIP…MAQVATRAIL (191 aa)). Arg707, Ser746, Leu748, Glu752, Gly777, Val778, His779, Ser780, Gln820, and Glu832 together coordinate ATP. Residues Gln820, Glu832, and Asn834 each contribute to the Mg(2+) site. Residues Gln820, Glu832, and Asn834 each contribute to the Mn(2+) site. The MGS-like domain maps to 930-1058 (LHVPSHGNVL…ESQSFVTQAL (129 aa)). The tract at residues 930–1058 (LHVPSHGNVL…ESQSFVTQAL (129 aa)) is allosteric domain.

The protein belongs to the CarB family. Composed of two chains; the small (or glutamine) chain promotes the hydrolysis of glutamine to ammonia, which is used by the large (or ammonia) chain to synthesize carbamoyl phosphate. Tetramer of heterodimers (alpha,beta)4. The cofactor is Mg(2+). Mn(2+) serves as cofactor.

The enzyme catalyses hydrogencarbonate + L-glutamine + 2 ATP + H2O = carbamoyl phosphate + L-glutamate + 2 ADP + phosphate + 2 H(+). It carries out the reaction hydrogencarbonate + NH4(+) + 2 ATP = carbamoyl phosphate + 2 ADP + phosphate + 2 H(+). It participates in amino-acid biosynthesis; L-arginine biosynthesis; carbamoyl phosphate from bicarbonate: step 1/1. Its pathway is pyrimidine metabolism; UMP biosynthesis via de novo pathway; (S)-dihydroorotate from bicarbonate: step 1/3. In terms of biological role, small subunit of the glutamine-dependent carbamoyl phosphate synthetase (CPSase). CPSase catalyzes the formation of carbamoyl phosphate from the ammonia moiety of glutamine, carbonate, and phosphate donated by ATP, constituting the first step of the biosynthetic pathway leading to pyrimidine nucleotides. The large subunit (synthetase) binds the substrates ammonia (free or transferred from glutamine from the small subunit), hydrogencarbonate and ATP and carries out an ATP-coupled ligase reaction, activating hydrogencarbonate by forming carboxy phosphate which reacts with ammonia to form carbamoyl phosphate. This is Carbamoyl phosphate synthase pyrimidine-specific large chain (pyrAB) from Lactiplantibacillus plantarum (strain ATCC BAA-793 / NCIMB 8826 / WCFS1) (Lactobacillus plantarum).